Consider the following 305-residue polypeptide: Glycine--tRNA ligase alpha subunit (305 aa).

Belongs to the class-II aminoacyl-tRNA synthetase family. In terms of assembly, tetramer of two alpha and two beta subunits.

It localises to the cytoplasm. The enzyme catalyses tRNA(Gly) + glycine + ATP = glycyl-tRNA(Gly) + AMP + diphosphate. This is Glycine--tRNA ligase alpha subunit from Streptococcus pneumoniae (strain ATCC 700669 / Spain 23F-1).